Here is a 218-residue protein sequence, read N- to C-terminus: Thiopurine S-methyltransferase (218 aa).

The S-adenosyl-L-methionine site is built by W10, L45, E66, and R123.

The protein belongs to the class I-like SAM-binding methyltransferase superfamily. TPMT family.

It is found in the cytoplasm. It catalyses the reaction S-adenosyl-L-methionine + a thiopurine = S-adenosyl-L-homocysteine + a thiopurine S-methylether.. In Shewanella sp. (strain ANA-3), this protein is Thiopurine S-methyltransferase.